The primary structure comprises 226 residues: Protein AhpA (226 aa).

The next 2 helical transmembrane spans lie at 12–32 (SMIS…LFGV) and 169–189 (GELI…HYFL).

Belongs to the Smp family.

It localises to the cell inner membrane. Functionally, when anaerobically expressed in wild-type E.coli K12 confers a hemolytic phenotype, but not in an sheA mutant. Suggests it affects the expression of the latent E.coli K12 hemolysin sheA under anaerobic conditions. This Pasteurella multocida (strain Pm70) protein is Protein AhpA (ahpA).